The chain runs to 319 residues: 4-hydroxy-3-methylbut-2-enyl diphosphate reductase (319 aa).

Residue cysteine 15 coordinates [4Fe-4S] cluster. (2E)-4-hydroxy-3-methylbut-2-enyl diphosphate-binding residues include histidine 44 and histidine 77. Positions 44 and 77 each coordinate dimethylallyl diphosphate. Isopentenyl diphosphate is bound by residues histidine 44 and histidine 77. A [4Fe-4S] cluster-binding site is contributed by cysteine 99. A (2E)-4-hydroxy-3-methylbut-2-enyl diphosphate-binding site is contributed by histidine 127. Histidine 127 is a binding site for dimethylallyl diphosphate. Isopentenyl diphosphate is bound at residue histidine 127. Glutamate 129 functions as the Proton donor in the catalytic mechanism. Threonine 172 contacts (2E)-4-hydroxy-3-methylbut-2-enyl diphosphate. Cysteine 202 provides a ligand contact to [4Fe-4S] cluster. Residues serine 230, serine 231, asparagine 232, and serine 274 each coordinate (2E)-4-hydroxy-3-methylbut-2-enyl diphosphate. Serine 230, serine 231, asparagine 232, and serine 274 together coordinate dimethylallyl diphosphate. The isopentenyl diphosphate site is built by serine 230, serine 231, asparagine 232, and serine 274.

It belongs to the IspH family. It depends on [4Fe-4S] cluster as a cofactor.

The catalysed reaction is isopentenyl diphosphate + 2 oxidized [2Fe-2S]-[ferredoxin] + H2O = (2E)-4-hydroxy-3-methylbut-2-enyl diphosphate + 2 reduced [2Fe-2S]-[ferredoxin] + 2 H(+). The enzyme catalyses dimethylallyl diphosphate + 2 oxidized [2Fe-2S]-[ferredoxin] + H2O = (2E)-4-hydroxy-3-methylbut-2-enyl diphosphate + 2 reduced [2Fe-2S]-[ferredoxin] + 2 H(+). It participates in isoprenoid biosynthesis; dimethylallyl diphosphate biosynthesis; dimethylallyl diphosphate from (2E)-4-hydroxy-3-methylbutenyl diphosphate: step 1/1. The protein operates within isoprenoid biosynthesis; isopentenyl diphosphate biosynthesis via DXP pathway; isopentenyl diphosphate from 1-deoxy-D-xylulose 5-phosphate: step 6/6. Catalyzes the conversion of 1-hydroxy-2-methyl-2-(E)-butenyl 4-diphosphate (HMBPP) into a mixture of isopentenyl diphosphate (IPP) and dimethylallyl diphosphate (DMAPP). Acts in the terminal step of the DOXP/MEP pathway for isoprenoid precursor biosynthesis. The polypeptide is 4-hydroxy-3-methylbut-2-enyl diphosphate reductase (Xanthomonas euvesicatoria pv. vesicatoria (strain 85-10) (Xanthomonas campestris pv. vesicatoria)).